Consider the following 252-residue polypeptide: Hydroxyacylglutathione hydrolase (252 aa).

Positions 54, 56, 58, 59, 113, 132, and 170 each coordinate Zn(2+).

It belongs to the metallo-beta-lactamase superfamily. Glyoxalase II family. In terms of assembly, monomer. Zn(2+) serves as cofactor.

The enzyme catalyses an S-(2-hydroxyacyl)glutathione + H2O = a 2-hydroxy carboxylate + glutathione + H(+). The protein operates within secondary metabolite metabolism; methylglyoxal degradation; (R)-lactate from methylglyoxal: step 2/2. Its function is as follows. Thiolesterase that catalyzes the hydrolysis of S-D-lactoyl-glutathione to form glutathione and D-lactic acid. This is Hydroxyacylglutathione hydrolase from Thermosynechococcus vestitus (strain NIES-2133 / IAM M-273 / BP-1).